The sequence spans 96 residues: MKCFAQIVVLLLVIAFSHGAVITGVCDRDAQCGSGTCCAASAFSRNIRFCVPLGNNGEECHPASHKVPYNGKRLSSLCPCNTGLTCSKSGEKSQCS.

The signal sequence occupies residues 1 to 19 (MKCFAQIVVLLLVIAFSHG). Disulfide bonds link C26–C38, C32–C50, C37–C78, C60–C86, and C80–C95.

This sequence belongs to the AVIT (prokineticin) family. In terms of tissue distribution, expressed by the skin glands.

Its subcellular location is the secreted. Its function is as follows. Potent agonist for both PKR1/PROKR1 and PKR2/PROKR2, and inducer of a potent and long-lasting hyperalgesia. Also potentiates capsaicin-induced TRPV1 current, when tested on DRG neurons. At subnanomolar concentrations, this protein both induces potent chemotaxis of macrophages and stimulates LPS-induced production of the pro-inflammatory cytokines IL-1 and IL-12. In vivo, potently stimulates the contraction of the guinea-pig gastrointestinal (GI) smooth muscle (nanomolar concentration). This Bombina maxima (Giant fire-bellied toad) protein is Prokineticin Bm8-d.